The following is a 246-amino-acid chain: Major pollen allergen Cyn d 1 (246 aa).

A glycan (N-linked (GlcNAc...) asparagine) is linked at Asn9. The Expansin-like EG45 domain occupies 39–145 (GGACGYKDVD…RRVKCKYPSG (107 aa)). Positions 159-240 (HYLALLVKYA…NWKPDTVYTS (82 aa)) constitute an Expansin-like CBD domain.

This sequence belongs to the expansin family. Expansin B subfamily.

Its subcellular location is the secreted. This Cynodon dactylon (Bermuda grass) protein is Major pollen allergen Cyn d 1 (CYND1).